The chain runs to 499 residues: Lysine--tRNA ligase (499 aa).

Glu-408 and Glu-415 together coordinate Mg(2+).

Belongs to the class-II aminoacyl-tRNA synthetase family. Homodimer. It depends on Mg(2+) as a cofactor.

It is found in the cytoplasm. The enzyme catalyses tRNA(Lys) + L-lysine + ATP = L-lysyl-tRNA(Lys) + AMP + diphosphate. This chain is Lysine--tRNA ligase, found in Bacillus cytotoxicus (strain DSM 22905 / CIP 110041 / 391-98 / NVH 391-98).